A 607-amino-acid polypeptide reads, in one-letter code: ATP-dependent DNA helicase II subunit 1 (607 aa).

The region spanning 241 to 452 (MDLGNDVRIG…IETMQRILRG (212 aa)) is the Ku domain. The 35-residue stretch at 570-604 (IKALKVSQLKDILRDRGLRVSGKKADLLDNLTNYV) folds into the SAP domain.

This sequence belongs to the ku70 family. As to quaternary structure, heterodimer of pku70 and pku80.

The protein localises to the nucleus. The protein resides in the chromosome. It is found in the telomere. The enzyme catalyses ATP + H2O = ADP + phosphate + H(+). Single-stranded DNA-dependent ATP-dependent helicase. Involved in non-homologous end joining (NHEJ) DNA double strand break repair. DNA-binding is sequence-independent but has a high affinity to nicks in double-stranded DNA and to the ends of duplex DNA. Binds to naturally occurring chromosomal ends, and therefore provides chromosomal end protection. Required also for telomere recombination to repair telomeric ends in the absence of telomerase. ku70, of the ku70/ku80 heterodimer, binds to the stem loop of tlc1, the RNA component of telomerase. Required for mating-type switching. Involved in telomere maintenance. Interacts with telomeric repeats and subtelomeric sequences thereby controlling telomere length and protecting against subtelomeric rearrangement. Maintains telomeric chromatin, which is involved in silencing the expression of genes located at the telomere. The sequence is that of ATP-dependent DNA helicase II subunit 1 (pku70) from Schizosaccharomyces pombe (strain 972 / ATCC 24843) (Fission yeast).